A 498-amino-acid polypeptide reads, in one-letter code: Probable malate:quinone oxidoreductase 2 (498 aa).

This sequence belongs to the MQO family. The cofactor is FAD.

The enzyme catalyses (S)-malate + a quinone = a quinol + oxaloacetate. Its pathway is carbohydrate metabolism; tricarboxylic acid cycle; oxaloacetate from (S)-malate (quinone route): step 1/1. In Staphylococcus aureus (strain MW2), this protein is Probable malate:quinone oxidoreductase 2.